The following is an 809-amino-acid chain: Zinc finger CCCH domain-containing protein 24 (809 aa).

Position 1 is an N-acetylmethionine (methionine 1). A disordered region spans residues 1-74 (METSSIEINE…NLESSDTKIT (74 aa)). The span at 30–46 (ETSSIDELPSSDSNATD) shows a compositional bias: polar residues. Residues 51-65 (VGEKRKRADEDEKTN) are compositionally biased toward basic and acidic residues. The segment at 79–107 (WWKTSLCSYFRREASCSHGNECKYAHGEA) adopts a C3H1-type zinc-finger fold. S-adenosyl-L-methionine-binding residues include glutamine 536 and glutamate 586. The disordered stretch occupies residues 652-693 (EEMTNSEHVADQNLPPSNTQVEELQDNEQKDSSSLEPEKTTK). Residues 678 to 692 (NEQKDSSSLEPEKTT) are compositionally biased toward basic and acidic residues. Aspartate 704 is a binding site for S-adenosyl-L-methionine. Cysteine 732 functions as the Nucleophile in the catalytic mechanism.

It belongs to the class I-like SAM-binding methyltransferase superfamily. RNA M5U methyltransferase family.

This Arabidopsis thaliana (Mouse-ear cress) protein is Zinc finger CCCH domain-containing protein 24.